The chain runs to 238 residues: Protein Iojap, chloroplastic (238 aa).

Residues 1–66 (MASSTGLTVA…KILTSLSNSR (66 aa)) constitute a chloroplast transit peptide.

It belongs to the Iojap/RsfS family. Interacts with chloroplast ribosomal protein uL14c (rpl14).

The protein resides in the plastid. The protein localises to the chloroplast. Its function is as follows. May be a ribosome silencing factor (Potential). Involved in plastid biogenesis. This Arabidopsis thaliana (Mouse-ear cress) protein is Protein Iojap, chloroplastic (IJ).